A 563-amino-acid chain; its full sequence is Sperm-tail PG-rich repeat-containing protein 2 (563 aa).

3 STPGR repeats span residues 21 to 34, 63 to 73, and 97 to 107; these read VGPGTYQVPFPKQQ, PGPAHYNVSQA, and GPGPASYDCPY. The segment at 131–163 is disordered; it reads IPSIPSSGKSHGYHLNEDDTIMRRTPPSSDKTM. STPGR repeat units lie at residues 200-219, 250-263, 292-321, 334-353, 423-438, 473-483, and 507-518; these read GPGPGHYDIIQKRKLRYENI, PGPGKYNIKSQFDH, TPAPGTYNETRTAFKVPKKRSGLFSPFGQR, LPGPGFYDISTNIVKAQVKK, LPAPGCYDVQKSYDMS, GPGPATYNPIL, and SPGPTTYELSPF.

This Rattus norvegicus (Rat) protein is Sperm-tail PG-rich repeat-containing protein 2 (Stpg2).